The following is a 281-amino-acid chain: MLRHSPQFSVYRIALTLFFMMLSLLYLFPIFCLLLGSLKPSSELLRVGLNLDIDPKVMSFDNYTFLFNGGSIYFKWFFNSLVLGLFTTVLTLFFSSMIGYGLAVYDFKGRNIIFVLVLIIMMVPLEVMMLPLFKLTVGLHLIDSYTGVILPFIVSPVAVFFFRQYALGLPRDLLDSARMDGCTEFGIFFRIMAPLMKPAFGAMIILQSLNSWNNFLWPLIVLRSKEMFTLPIGLSSLLSPYGNNYDMLISGSVFAILPVIIIFLFFQKYFISGLTVGGVKG.

The next 6 membrane-spanning stretches (helical) occupy residues 15-35, 81-101, 112-132, 142-162, 185-205, and 247-267; these read LTLF…CLLL, LVLG…IGYG, IIFV…MLPL, IDSY…VFFF, FGIF…AMII, and MLIS…LFFQ. The ABC transmembrane type-1 domain occupies 77 to 266; the sequence is FFNSLVLGLF…LPVIIIFLFF (190 aa).

The protein belongs to the binding-protein-dependent transport system permease family. MalFG subfamily. As to quaternary structure, the complex is composed of two ATP-binding proteins (MsmX), two transmembrane proteins (AraP and AraQ) and a solute-binding protein (AraN).

It localises to the cell membrane. Functionally, part of the ABC transporter complex AraNPQ involved in the uptake of arabinooligosaccharides. Transports alpha-1,5-arabinooligosaccharides, at least up to four L-arabinosyl units. Responsible for the translocation of the substrate across the membrane. This chain is Arabinooligosaccharides transport system permease protein AraQ, found in Bacillus subtilis (strain 168).